Here is a 353-residue protein sequence, read N- to C-terminus: Protein Wnt-11b (353 aa).

Residues 1 to 22 form the signal peptide; that stretch reads MAPTRHWVTPLLLLCCSGICGA. Residues N31, N38, and N88 are each glycosylated (N-linked (GlcNAc...) asparagine). 5 disulfide bridges follow: C78–C89, C128–C136, C138–C155, C208–C222, and C210–C217. A lipid anchor (O-palmitoleoyl serine; by PORCN) is attached at S214. Sulfotyrosine is present on residues Y274 and Y281. Cystine bridges form between C282–C313, C298–C308, C312–C352, C328–C343, C330–C340, and C335–C336. The N-linked (GlcNAc...) asparagine glycan is linked to N299.

This sequence belongs to the Wnt family. In terms of assembly, homodimer. Secreted homodimers form a complex with wnt5a homodimers; tyrosine sulfation of both wnt11 and wnt5a by tpst1 is required for this interaction. Interacts with the transmembrane receptor fzd7/fz7. Interacts with lrp6 and ryk. Interacts with tdgf1/frl1. Interacts weakly with frzb1 and strongly with frzb2/crescent. Interaction with frzb2/crescent antagonizes wnt11 function in the neuroectoderm, but enhances it in mesodermal tissue. Post-translationally, glycosylation is required for protein secretion. In terms of processing, palmitoleoylation is required for efficient binding to frizzled receptors. Depalmitoleoylation leads to Wnt signaling pathway inhibition. As to expression, transcripts are expressed ubiquitously in early oocytes but become vegetally localized during mid-oogenesis then enriched on the dorsal side by the 8 to 16 cell stage. The protein becomes asymmetrically concentrated on the dorsal side by the 64-cell stage. During gastrulation, expressed in the lateral and ventral marginal zone, and during tadpole stages in the somites and first branchial arch. Weakly expressed in the pronephros from at least stage 12.5, with kidney expression increasing until stage 35. Expressed in the prospective posterior gut between stages 13 and 20, and in the deep foregut endoderm. Prior to neural crest cell migration, expressed in a domain flanking the neural crest on the lateral or epidermal side (the opposite side to wnt11/wnt11-r).

The protein resides in the secreted. It is found in the extracellular space. The protein localises to the extracellular matrix. Its function is as follows. Ligand for the frizzled7 transmembrane receptor. Primarily acts via non-canonical Wnt pathways mediated by either Ca(2+) and PKC, or by JNK and dvl2/dsh. Depending on the cellular context, can also signal via the canonical Wnt pathway mediated by beta-catenin and dvl2/dsh. May also inhibit canonical Wnt signaling. Maternally initiates dorsal/ventral axis formation by a canonical route, which signals via lrp6. In a complex with wnt5a, activates the canonical and non-canonical processes involved in axis formation. In the non-canonical pathway, acts through fzd7/fz7 to induce phosphorylation of dvl2/dsh. Signals through a non-canonical Wnt pathway to regulate convergent extension movements during gastrulation. Interactions with the secreted Wnt antagonist sfrp5 to coordinate foregut development, acting via a non-canonical Wnt pathway whereby sfrp5 restricts wnt11b activity to prevent inappropriate foregut formation. Mediates cardiogenesis via non-canonical Wnt signaling involving JNK-activation and PKC. Acts redundantly with wnt11/wnt11r during pronephros induction. The polypeptide is Protein Wnt-11b (wnt11b) (Xenopus laevis (African clawed frog)).